Here is a 315-residue protein sequence, read N- to C-terminus: WD repeat domain-containing protein 83 (315 aa).

7 WD repeats span residues 23-62, 65-104, 107-146, 151-188, 190-228, 231-272, and 275-313; these read CSQG…LLRT, GHGY…VVRK, GHAG…PEPV, EARD…VSSD, VGSP…LLGE, GHKN…LALA, and VGSN…AEGG.

The protein belongs to the WD repeat MORG1 family. In terms of assembly, interacts with EGLN3/PHD3. Interacts with ERK signaling proteins MAP2K1/MEK1, MAP2K2/MEK2, LAMTOR3, ARAF/Raf-1, MAPK1/ERK2 and MAPK3/ERK1. Identified in the spliceosome C complex. Interacts with PARD6B and CRB3. Interacts strongly with GTP-bound RRAGA but not with inactive GDP-bound. Interacts with p62/SQSTM1. As to expression, ubiquitous.

It is found in the cytoplasm. It localises to the lysosome. The protein localises to the nucleus. In terms of biological role, molecular scaffold protein for various multimeric protein complexes. Acts as a module in the assembly of a multicomponent scaffold for the ERK pathway, linking ERK responses to specific agonists. At low concentrations it enhances ERK activation, whereas high concentrations lead to the inhibition of ERK activation. Also involved in response to hypoxia by acting as a negative regulator of HIF1A/HIF-1-alpha via its interaction with EGLN3/PHD3. May promote degradation of HIF1A. May act by recruiting signaling complexes to a specific upstream activator. May also be involved in pre-mRNA splicing. Participates in tight junction development by regulating apico-basal polarity, a key step in tissue development and organization. Mechanistically, regulates the translocation of PAR6-aPKC from the cytoplasm to the apical surface by acting as an adapter between PARD6B AND CRB3. Also acts as a negative regulator of mTORC1 under nutrient-rich conditions by binding to the active Rag GTPases to inhibit mTORC1 localization to the lysosome and phosphorylation of downstream targets. This facilitates constitutive basal autophagy during nutrient availability. This chain is WD repeat domain-containing protein 83 (Wdr83), found in Mus musculus (Mouse).